A 659-amino-acid chain; its full sequence is A-type ATP synthase subunit I (659 aa).

8 helical membrane-spanning segments follow: residues 376-396, 415-435, 460-480, 489-509, 518-538, 542-562, 568-588, and 590-610; these read FFFGFMLTDFVYGLLLGIISA, IMLWSSVFTMTLGILFGSYCG, MIALAIGLAHLFTGYLLGFIV, GAIFEQLSWLLIIIGITLFAL, LIVKGIFGIGLILFMIGEVLA, MAVLLVISDFFGFVGNWLSYA, ALATSGIALVINILVEMIWGI, and IASVPLGALIGILVLIGGHIF.

The protein belongs to the V-ATPase 116 kDa subunit family. In terms of assembly, has multiple subunits with at least A(3), B(3), C, D, E, F, H, I and proteolipid K(x).

It is found in the cell membrane. Its function is as follows. Component of the A-type ATP synthase that produces ATP from ADP in the presence of a proton gradient across the membrane. The chain is A-type ATP synthase subunit I from Pyrococcus horikoshii (strain ATCC 700860 / DSM 12428 / JCM 9974 / NBRC 100139 / OT-3).